Consider the following 69-residue polypeptide: Sec-independent protein translocase protein TatA (69 aa).

Residues 1–21 (MMPGPFELIIILVIVLLLFGG) form a helical membrane-spanning segment.

It belongs to the TatA/E family. In terms of assembly, the Tat system comprises two distinct complexes: a TatABC complex, containing multiple copies of TatA, TatB and TatC subunits, and a separate TatA complex, containing only TatA subunits. Substrates initially bind to the TatABC complex, which probably triggers association of the separate TatA complex to form the active translocon.

Its subcellular location is the cell inner membrane. Functionally, part of the twin-arginine translocation (Tat) system that transports large folded proteins containing a characteristic twin-arginine motif in their signal peptide across membranes. TatA could form the protein-conducting channel of the Tat system. The polypeptide is Sec-independent protein translocase protein TatA (Vesicomyosocius okutanii subsp. Calyptogena okutanii (strain HA)).